Here is a 262-residue protein sequence, read N- to C-terminus: ATP synthase subunit a (262 aa).

A run of 5 helical transmembrane segments spans residues 26 to 46 (VHID…FVFS), 86 to 106 (VAPL…IDLI), 130 to 150 (DISA…FYTI), 204 to 226 (LIFI…GIPL), and 240 to 260 (LQAF…YNKA).

This sequence belongs to the ATPase A chain family. As to quaternary structure, F-type ATPases have 2 components, CF(1) - the catalytic core - and CF(0) - the membrane proton channel. CF(1) has five subunits: alpha(3), beta(3), gamma(1), delta(1), epsilon(1). CF(0) has three main subunits: a(1), b(2) and c(9-12). The alpha and beta chains form an alternating ring which encloses part of the gamma chain. CF(1) is attached to CF(0) by a central stalk formed by the gamma and epsilon chains, while a peripheral stalk is formed by the delta and b chains.

It localises to the cell inner membrane. Key component of the proton channel; it plays a direct role in the translocation of protons across the membrane. This is ATP synthase subunit a from Haemophilus influenzae (strain 86-028NP).